A 270-amino-acid polypeptide reads, in one-letter code: MCERSLYRAGYVGSLLNLQSPDSFYFSNLRPNGGQLAALPPISYPRGALPWAATPASCAPAQPAGATAFGGFSQPYLAGSGPLGLQPPTAKDGPEEQAKFYAPEAAAGPEERGRTRPSFAPESSLAPAVAALKAAKYDYAGVGRATPGSTTLLQGAPCAPGFKDDTKGPLNLNMTVQAAGVASCLRPSLPDGLPWGAAPGRARKKRKPYTKQQIAELENEFLVNEFINRQKRKELSNRLNLSDQQVKIWFQNRRMKKKRVVLREQALALY.

A disordered region spans residues 102–122 (APEAAAGPEERGRTRPSFAPE). The segment at residues 202 to 261 (ARKKRKPYTKQQIAELENEFLVNEFINRQKRKELSNRLNLSDQQVKIWFQNRRMKKKRVV) is a DNA-binding region (homeobox).

The protein belongs to the Abd-B homeobox family.

Its subcellular location is the nucleus. Sequence-specific transcription factor which is part of a developmental regulatory system that provides cells with specific positional identities on the anterior-posterior axis. In Homo sapiens (Human), this protein is Homeobox protein Hox-D12 (HOXD12).